A 445-amino-acid chain; its full sequence is C-terminal-binding protein 2 (445 aa).

An Asymmetric dimethylarginine modification is found at Arg-22. NAD(+)-binding positions include Ser-106, 186-191 (IGFGRT), Asp-210, 243-249 (CNLNEHN), 270-272 (AAR), and Asp-296. Arg-272 is a catalytic residue. Glu-301 is an active-site residue. The active-site Proton donor is His-321. Position 321–324 (321–324 (HTAW)) interacts with NAD(+). The segment at 414 to 445 (THNLPTVAHPSQAPSPNQPTKHGDNREHPNEQ) is disordered. The residue at position 428 (Ser-428) is a Phosphoserine. A compositionally biased stretch (basic and acidic residues) spans 434–445 (KHGDNREHPNEQ).

The protein belongs to the D-isomer specific 2-hydroxyacid dehydrogenase family. In terms of assembly, can form homodimers or heterodimers of CTBP1 and CTBP2. Interacts with HIPK2 and ZNF217. Interacts with PRDM16; represses white adipose tissue (WAT)-specific genes expression. Interacts with PNN, NRIP1 and WIZ. Interacts with MCRIP1. As to quaternary structure, (Microbial infection) Interacts with human adenovirus 5 E1A protein; this interaction seems to potentiate viral replication. In terms of tissue distribution, ubiquitous. Highest levels in heart, skeletal muscle, and pancreas.

Its subcellular location is the nucleus. It is found in the synapse. Its function is as follows. Corepressor targeting diverse transcription regulators. Functions in brown adipose tissue (BAT) differentiation. In terms of biological role, isoform 2 probably acts as a scaffold for specialized synapses. The sequence is that of C-terminal-binding protein 2 (CTBP2) from Homo sapiens (Human).